The sequence spans 725 residues: Phosphoribosylformylglycinamidine synthase subunit PurL (725 aa).

His42 is an active-site residue. 2 residues coordinate ATP: Tyr45 and Lys84. A Mg(2+)-binding site is contributed by Glu86. Residues 87-90 (SHNH) and Arg109 contribute to the substrate site. Catalysis depends on His88, which acts as the Proton acceptor. Residue Asp110 participates in Mg(2+) binding. Gln237 provides a ligand contact to substrate. Residue Asp265 coordinates Mg(2+). 309 to 311 (ESQ) lines the substrate pocket. ATP-binding residues include Asp491 and Gly528. Position 529 (Asn529) interacts with Mg(2+). Ser531 contributes to the substrate binding site.

Belongs to the FGAMS family. As to quaternary structure, monomer. Part of the FGAM synthase complex composed of 1 PurL, 1 PurQ and 2 PurS subunits.

It localises to the cytoplasm. It catalyses the reaction N(2)-formyl-N(1)-(5-phospho-beta-D-ribosyl)glycinamide + L-glutamine + ATP + H2O = 2-formamido-N(1)-(5-O-phospho-beta-D-ribosyl)acetamidine + L-glutamate + ADP + phosphate + H(+). It participates in purine metabolism; IMP biosynthesis via de novo pathway; 5-amino-1-(5-phospho-D-ribosyl)imidazole from N(2)-formyl-N(1)-(5-phospho-D-ribosyl)glycinamide: step 1/2. Part of the phosphoribosylformylglycinamidine synthase complex involved in the purines biosynthetic pathway. Catalyzes the ATP-dependent conversion of formylglycinamide ribonucleotide (FGAR) and glutamine to yield formylglycinamidine ribonucleotide (FGAM) and glutamate. The FGAM synthase complex is composed of three subunits. PurQ produces an ammonia molecule by converting glutamine to glutamate. PurL transfers the ammonia molecule to FGAR to form FGAM in an ATP-dependent manner. PurS interacts with PurQ and PurL and is thought to assist in the transfer of the ammonia molecule from PurQ to PurL. The protein is Phosphoribosylformylglycinamidine synthase subunit PurL of Campylobacter lari (strain RM2100 / D67 / ATCC BAA-1060).